The sequence spans 598 residues: MRNKICKELNNTDIGKLVNLCGWVDRRRDHGGVIFIDLRDHSGFLQITINPDDGADLFKQAETLRNETVIMVSGIINERPKDSINTNLSTGELELKVKDLQVLNQIKNNLPFPVSIHDYENTKEELRLKYRYLDLRRGKLLENLKTRHKIIKVSREFLDNFGFTEVETPLLTKSTPEGARDFLVPARLSNGEFFALPQSPQLFKQLLMVGGLDKYYQIAKCFRDEDLRADRQPEFTQLDIEMSFVSEEEIISFNESLIKKIWKEVLNINFNNAFPRMSWQAAMDNYGTDRPDTRYEMLLKDLGGVLGDIGFNIFTKAIKAGGYIKSITVKGGNSSISNVRIKPGGDIFQVAQDAGAGGLAFIRVKGDELETIGAIKNNLSEEHIADILKITEAKDGDLILLGAGDKQIVNQSLDRVRQYIAKDLNLIDKSKWNFLWVTDFPMFERNEDENRYEALHHPFCSPKNIKSKDSDKMQKEIENSIANAYDLVLNGMELGGGSLRIHEANLQREVLKTVGLTDKEIDEKFGFLIEALEMGAPPHGGIAFGLDRITMLLIGADSIRETIAFPKNQQAKCLLTNAPSNVSESQLKELDIEITIDE.

Glutamate 177 lines the L-aspartate pocket. The interval 201-204 is aspartate; it reads QLFK. Arginine 223 contacts L-aspartate. ATP-binding positions include 223–225 and glutamine 232; that span reads RDE. Histidine 456 is a binding site for L-aspartate. Residue glutamate 493 participates in ATP binding. Arginine 500 serves as a coordination point for L-aspartate. 545-548 serves as a coordination point for ATP; that stretch reads GLDR.

The protein belongs to the class-II aminoacyl-tRNA synthetase family. Type 1 subfamily. In terms of assembly, homodimer.

It localises to the cytoplasm. The catalysed reaction is tRNA(Asx) + L-aspartate + ATP = L-aspartyl-tRNA(Asx) + AMP + diphosphate. In terms of biological role, aspartyl-tRNA synthetase with relaxed tRNA specificity since it is able to aspartylate not only its cognate tRNA(Asp) but also tRNA(Asn). Reaction proceeds in two steps: L-aspartate is first activated by ATP to form Asp-AMP and then transferred to the acceptor end of tRNA(Asp/Asn). The sequence is that of Aspartate--tRNA(Asp/Asn) ligase from Prochlorococcus marinus (strain MIT 9215).